A 789-amino-acid chain; its full sequence is Probable phosphoketolase 1 (789 aa).

Belongs to the XFP family. Thiamine diphosphate serves as cofactor.

This Rhizobium meliloti (strain 1021) (Ensifer meliloti) protein is Probable phosphoketolase 1.